Here is a 445-residue protein sequence, read N- to C-terminus: Phosphoglucosamine mutase (445 aa).

Catalysis depends on Ser102, which acts as the Phosphoserine intermediate. Mg(2+) is bound by residues Ser102, Asp241, Asp243, and Asp245. Position 102 is a phosphoserine (Ser102).

It belongs to the phosphohexose mutase family. Requires Mg(2+) as cofactor. In terms of processing, activated by phosphorylation.

The catalysed reaction is alpha-D-glucosamine 1-phosphate = D-glucosamine 6-phosphate. In terms of biological role, catalyzes the conversion of glucosamine-6-phosphate to glucosamine-1-phosphate. The polypeptide is Phosphoglucosamine mutase (Escherichia coli O157:H7).